The chain runs to 141 residues: Auxin-responsive protein SAUR61 (141 aa).

This sequence belongs to the ARG7 family.

The protein resides in the cell membrane. Its function is as follows. May promote auxin-stimulated organ elongation, such as hypocotyls, stamen filaments and petals. This Arabidopsis thaliana (Mouse-ear cress) protein is Auxin-responsive protein SAUR61.